We begin with the raw amino-acid sequence, 357 residues long: Transcription factor unc-86 (357 aa).

Positions 35-44 (RAAQVALADI) match the POU-IV box motif. Residues 155–232 (DMDTDPRQLE…ILHSWLEKAE (78 aa)) form the POU-specific domain. A DNA-binding region (homeobox) is located at residues 253-312 (KKRKRTSIAAPEKRELEQFFKQQPRPSGERIASIADRLDLKKNVVRVWFCNQRQKQKRDF).

This sequence belongs to the POU transcription factor family. Class-4 subfamily. In terms of assembly, interacts with mec-3; the heterooligomer binds to the promoters of mec-3, mec-4 and mec-7. As to expression, specific to neurons and neuroblasts. Expressed in CEM head neurons and in IL2, URA, URB, URX and URY neurons. Not expressed in olfactory sensory neurons but expressed in AIZ interneurons.

The protein localises to the nucleus. Functionally, transcription factor required for correct cell fate determination and differentiation in diverse neuronal cell lineages where it plays a role in specifying the fate of daughter cells during cell divisions. Involved in sensory neuron production and function. Binds both alone and with mec-3 to the mec-3 promoter to initiate and maintain mec-3 expression which is required for sensory neuron differentiation. In addition, binds both alone and with mec-3 to the promoters of mec-4 and mec-7 which act to regulate sensory neuron function. Involved in determining the identity of the serotonergic NSM neurons and the cholinergic IL2 sensory and URA motor neurons. Promotes expression of the cfi-1 transcription factor in the URA and IL2 neurons which in turn activates normal URA and IL2 gene expression. Required to determine the identity of BDU sensory neurons in concert with transcription factor unc-86, regulating expression of a number of genes, including transcription factors ceh-14 and ahr-1, neuropeptides flp-10, nlp-1 and nlp-15, and tyramine receptor-encoding ser-2. Regulates expression of a number of genes in NSM neurons including bas-1, cat-1, dop-3, mgl-3, nlp-13, scd-2 and ptps-1. In the IL2 neurons, required for expression of cho-1, gcy-19, klp-6, lag-2, unc-5 and unc-17. Promotes expression of pkd-2 in the male-specific CEM head neurons. Required for dauer-specific branching of IL2Q neurons and nictation behavior. Controls both the timing and direction of axon outgrowth in HSN neurons. Plays a role in serotonin production by regulating expression of the tryptophan hydrolase tph-1 which catalyzes serotonin synthesis, in the AIM, NSM, HSN and RIH neurons. Involved in regulation of lin-11 expression in the AIZ interneurons, the major interneurons of the olfactory pathway, and is required for odortaxis behavior. Involved in neurite pruning between AIM neurons during larval development by regulating the expression of transcription factor mbr-1. Required for correct localization of unc-40. The chain is Transcription factor unc-86 (unc-86) from Caenorhabditis elegans.